A 432-amino-acid chain; its full sequence is Glutamate-1-semialdehyde 2,1-aminomutase 1 (432 aa).

Lys268 carries the N6-(pyridoxal phosphate)lysine modification.

It belongs to the class-III pyridoxal-phosphate-dependent aminotransferase family. HemL subfamily. In terms of assembly, homodimer. Requires pyridoxal 5'-phosphate as cofactor.

It localises to the cytoplasm. The enzyme catalyses (S)-4-amino-5-oxopentanoate = 5-aminolevulinate. It participates in porphyrin-containing compound metabolism; protoporphyrin-IX biosynthesis; 5-aminolevulinate from L-glutamyl-tRNA(Glu): step 2/2. The chain is Glutamate-1-semialdehyde 2,1-aminomutase 1 from Bacillus mycoides (strain KBAB4) (Bacillus weihenstephanensis).